The following is a 206-amino-acid chain: Large ribosomal subunit protein uL22m (206 aa).

The N-terminal 40 residues, 1-40 (MAAAVLGQLGALWIHNLRSRGKLALGVLPQSYIHTSASLD), are a transit peptide targeting the mitochondrion.

This sequence belongs to the universal ribosomal protein uL22 family. In terms of assembly, component of the mitochondrial large ribosomal subunit (mt-LSU). Mature mammalian 55S mitochondrial ribosomes consist of a small (28S) and a large (39S) subunit. The 28S small subunit contains a 12S ribosomal RNA (12S mt-rRNA) and 30 different proteins. The 39S large subunit contains a 16S rRNA (16S mt-rRNA), a copy of mitochondrial valine transfer RNA (mt-tRNA(Val)), which plays an integral structural role, and 52 different proteins.

The protein resides in the mitochondrion. The polypeptide is Large ribosomal subunit protein uL22m (MRPL22) (Homo sapiens (Human)).